Consider the following 368-residue polypeptide: Transaldolase (368 aa).

The active-site Schiff-base intermediate with substrate is lysine 140.

Belongs to the transaldolase family. Type 2 subfamily.

The protein resides in the cytoplasm. It carries out the reaction D-sedoheptulose 7-phosphate + D-glyceraldehyde 3-phosphate = D-erythrose 4-phosphate + beta-D-fructose 6-phosphate. The protein operates within carbohydrate degradation; pentose phosphate pathway; D-glyceraldehyde 3-phosphate and beta-D-fructose 6-phosphate from D-ribose 5-phosphate and D-xylulose 5-phosphate (non-oxidative stage): step 2/3. Transaldolase is important for the balance of metabolites in the pentose-phosphate pathway. The chain is Transaldolase from Thermobifida fusca (strain YX).